Reading from the N-terminus, the 277-residue chain is Sulfur carrier protein FdhD (277 aa).

Catalysis depends on Cys121, which acts as the Cysteine persulfide intermediate. Position 260–265 (260–265) interacts with Mo-bis(molybdopterin guanine dinucleotide); the sequence is FCKPGR.

This sequence belongs to the FdhD family.

The protein resides in the cytoplasm. In terms of biological role, required for formate dehydrogenase (FDH) activity. Acts as a sulfur carrier protein that transfers sulfur from IscS to the molybdenum cofactor prior to its insertion into FDH. The protein is Sulfur carrier protein FdhD of Escherichia coli O6:H1 (strain CFT073 / ATCC 700928 / UPEC).